Reading from the N-terminus, the 175-residue chain is Homeobox expressed in ES cells 1 (175 aa).

The tract at residues Met1–Pro44 is disordered. The homeobox DNA-binding region spans Gly108 to His167.

The protein belongs to the ANF homeobox family. Interacts with TLE1.

The protein localises to the nucleus. Its function is as follows. Required for the normal development of the forebrain, eyes and other anterior structures such as the olfactory placodes and pituitary gland. Possible transcriptional repressor. Binds to the palindromic PIII sequence, 5'-AGCTTGAGTCTAATTGAATTAACTGTAC-3'. This Oryctolagus cuniculus (Rabbit) protein is Homeobox expressed in ES cells 1 (HESX1).